Here is a 783-residue protein sequence, read N- to C-terminus: B-cell scaffold protein with ankyrin repeats (783 aa).

Residues 1-154 are interaction with ITPR2; that stretch reads MLPVASGTRG…GYISVIRQIL (154 aa). The TIR domain maps to 25-153; the sequence is NAKDILLLYE…DGYISVIRQI (129 aa). In terms of domain architecture, DBB spans 199–326; that stretch reads VLPGEIPCEK…EIPYYEFKHL (128 aa). ANK repeat units lie at residues 341–370 and 377–407; these read ELPTLLHCAAKFGLKNLALHLLQCSGATRA and DGSDLLHIAERHGHEELKEVFEDFLSQNTGR. Disordered stretches follow at residues 422–521, 538–586, 604–624, and 641–670; these read FSTY…AASQ, MERS…EDNE, SFIINRPPAPTPRPTHIPPKE, and RQSDGDKFYSLPKKPDKTRMEGPTFPSTRD. Residues 444-479 show a composition bias toward basic and acidic residues; the sequence is RNTDRSEEPERSVEMKEEEAGAEARRSLSEGERESS. Pro residues predominate over residues 505–515; the sequence is HCRPPLLPPRP. Residues 549 to 565 show a composition bias toward basic and acidic residues; that stretch reads ARPETREESSREEKKEE. A compositionally biased stretch (acidic residues) spans 566 to 586; that stretch reads AQEEEEEEENPYAFAETEDNE. A compositionally biased stretch (pro residues) spans 610–620; the sequence is PPAPTPRPTHI. Basic and acidic residues predominate over residues 641 to 660; that stretch reads RQSDGDKFYSLPKKPDKTRM. Tyr649 carries the post-translational modification Phosphotyrosine.

In terms of assembly, interacts with LYN, ITPR1 and ITPR2. In terms of processing, phosphorylated on tyrosines upon BCR activation. Specifically expressed in spleen. Highly expressed in immature B-cells and recirculating B-cells, and at low levels in pro-B and pre-B cells.

In terms of biological role, involved in B-cell receptor (BCR)-induced Ca(2+) mobilization from intracellular stores. Promotes Lyn-mediated phosphorylation of IP3 receptors 1 and 2. In Mus musculus (Mouse), this protein is B-cell scaffold protein with ankyrin repeats (Bank1).